Here is a 391-residue protein sequence, read N- to C-terminus: MVLGFSWLPPEINSARMFAGAGSGPLFAAASAWEGLAADLWASASSFESVLAALTTGPWTGPASMSMAAAASPYVGWLSTVASQAQLAAIQARAAATAFEAALAATVHPTAVTANRVSLASLIAANVLGQNTPAIAATEFDYLEMWAQDVAAMVGYHAGAKSVAATLAPFSLPPVSLAGLAAQVGTQVAGMATTASAAVTPVVEGAMASVPTVMSGMQSLVSQLPLQHASMLFLPVRILTSPITTLASMARESATRLGPPAGGLAAANTPNPSGAAIPAFKPLGGRELGAGMSAGLGQAQLVGSMSVPPTWQGSIPISMASSAMSGLGVPPNPVALTQAAGAAGGGMPMMLMPMSISGAGAGMPGGLMDRDGAGWHVTQARLTVIPRTGVG.

This sequence belongs to the mycobacterial PPE family.

This is an uncharacterized protein from Mycobacterium tuberculosis (strain CDC 1551 / Oshkosh).